A 473-amino-acid polypeptide reads, in one-letter code: Photosystem II CP43 reaction center protein (473 aa).

Positions 1 to 14 are excised as a propeptide; that stretch reads MKTLYSLRRFYHVE. An N-acetylthreonine modification is found at Thr15. A Phosphothreonine modification is found at Thr15. The next 5 helical transmembrane spans lie at 69-93, 134-155, 178-200, 255-275, and 291-312; these read LFEVAHFVPEKPMYEQGLILLPHLA, LLGPETLEESFPFFGYVWKDRN, KALYFGGVYDTWAPGGGDVRKIT, KPFAWARRALVWSGEAYLSYS, and WFNNTAYPSEFYGPTGPEASQA. Glu367 is a [CaMn4O5] cluster binding site. Residues 447 to 471 form a helical membrane-spanning segment; it reads RARAAAAGFEKGIDRDFEPVLSMTP.

The protein belongs to the PsbB/PsbC family. PsbC subfamily. In terms of assembly, PSII is composed of 1 copy each of membrane proteins PsbA, PsbB, PsbC, PsbD, PsbE, PsbF, PsbH, PsbI, PsbJ, PsbK, PsbL, PsbM, PsbT, PsbX, PsbY, PsbZ, Psb30/Ycf12, at least 3 peripheral proteins of the oxygen-evolving complex and a large number of cofactors. It forms dimeric complexes. Binds multiple chlorophylls and provides some of the ligands for the Ca-4Mn-5O cluster of the oxygen-evolving complex. It may also provide a ligand for a Cl- that is required for oxygen evolution. PSII binds additional chlorophylls, carotenoids and specific lipids. is required as a cofactor.

It localises to the plastid. The protein resides in the chloroplast thylakoid membrane. Functionally, one of the components of the core complex of photosystem II (PSII). It binds chlorophyll and helps catalyze the primary light-induced photochemical processes of PSII. PSII is a light-driven water:plastoquinone oxidoreductase, using light energy to abstract electrons from H(2)O, generating O(2) and a proton gradient subsequently used for ATP formation. The protein is Photosystem II CP43 reaction center protein of Crucihimalaya wallichii (Rock-cress).